The following is a 505-amino-acid chain: ATP synthase subunit alpha (505 aa).

Residue 171–178 (GDRQTGKT) participates in ATP binding.

This sequence belongs to the ATPase alpha/beta chains family. F-type ATPases have 2 components, CF(1) - the catalytic core - and CF(0) - the membrane proton channel. CF(1) has five subunits: alpha(3), beta(3), gamma(1), delta(1), epsilon(1). CF(0) has three main subunits: a(1), b(2) and c(9-12). The alpha and beta chains form an alternating ring which encloses part of the gamma chain. CF(1) is attached to CF(0) by a central stalk formed by the gamma and epsilon chains, while a peripheral stalk is formed by the delta and b chains.

The protein resides in the cell inner membrane. The enzyme catalyses ATP + H2O + 4 H(+)(in) = ADP + phosphate + 5 H(+)(out). Functionally, produces ATP from ADP in the presence of a proton gradient across the membrane. The alpha chain is a regulatory subunit. In Campylobacter hominis (strain ATCC BAA-381 / DSM 21671 / CCUG 45161 / LMG 19568 / NCTC 13146 / CH001A), this protein is ATP synthase subunit alpha.